A 149-amino-acid polypeptide reads, in one-letter code: Ribosome maturation factor RimP (149 aa).

It belongs to the RimP family.

Its subcellular location is the cytoplasm. Its function is as follows. Required for maturation of 30S ribosomal subunits. This Clostridium acetobutylicum (strain ATCC 824 / DSM 792 / JCM 1419 / IAM 19013 / LMG 5710 / NBRC 13948 / NRRL B-527 / VKM B-1787 / 2291 / W) protein is Ribosome maturation factor RimP.